Reading from the N-terminus, the 118-residue chain is Small ribosomal subunit protein uS13 (118 aa).

Positions 91–118 are disordered; it reads HRHSLPVRGQRTKTNARTRKGPRKPIRK.

This sequence belongs to the universal ribosomal protein uS13 family. Part of the 30S ribosomal subunit. Forms a loose heterodimer with protein S19. Forms two bridges to the 50S subunit in the 70S ribosome.

Its function is as follows. Located at the top of the head of the 30S subunit, it contacts several helices of the 16S rRNA. In the 70S ribosome it contacts the 23S rRNA (bridge B1a) and protein L5 of the 50S subunit (bridge B1b), connecting the 2 subunits; these bridges are implicated in subunit movement. Contacts the tRNAs in the A and P-sites. The sequence is that of Small ribosomal subunit protein uS13 from Hahella chejuensis (strain KCTC 2396).